We begin with the raw amino-acid sequence, 259 residues long: Undecaprenyl-diphosphatase 3 (259 aa).

8 helical membrane passes run Met-1–Ile-21, Ala-39–Tyr-59, Phe-71–Leu-91, Ile-99–Met-119, Ile-133–Ile-153, Ala-174–Val-194, Ser-208–Ile-228, and Leu-236–Thr-256.

The protein belongs to the UppP family.

Its subcellular location is the cell membrane. It carries out the reaction di-trans,octa-cis-undecaprenyl diphosphate + H2O = di-trans,octa-cis-undecaprenyl phosphate + phosphate + H(+). In terms of biological role, catalyzes the dephosphorylation of undecaprenyl diphosphate (UPP). Confers resistance to bacitracin. The sequence is that of Undecaprenyl-diphosphatase 3 from Bacillus cereus (strain ATCC 10987 / NRS 248).